Reading from the N-terminus, the 375-residue chain is MAINIEYVILRHLQMELKAPFTTSFGTFQTKEFILVEVVDCDGVSGWGESVAFSVPWYSEETVKTNWHMLEEFLVPLLFSKPLRHPAELPERFAAIRQNNMAKAALEGAVWDLYAKRLGVPLCQALGGTKKEIEVGVSIGIQPTVDDLLQVIERYVAQGYRRIKVKIKPGWDVDVIRDVRRAFPDVPLMADANSAYTLADAKRLQALDEFGLMMIEQPLAADDLVDHARLQPLLKTPICLDESIRSYDDARKALDLGSCRIINIKIGRVGGLWEAKRIHDLCAERGVPVWCGGMLEAGVGRAHNIAITTLENFALPGDTAASSHYWERDIITPEVEVHNGLIRVPNAPGIGYDVDRRQVERYTQFAKLFHRTATA.

Catalysis depends on Lys-166, which acts as the Proton donor. The Mg(2+) site is built by Asp-191, Glu-216, and Asp-241. Residue Lys-265 is the Proton acceptor of the active site.

Belongs to the mandelate racemase/muconate lactonizing enzyme family. MenC type 2 subfamily. Homotetramer. A divalent metal cation is required as a cofactor.

It catalyses the reaction (1R,6R)-6-hydroxy-2-succinyl-cyclohexa-2,4-diene-1-carboxylate = 2-succinylbenzoate + H2O. The enzyme catalyses N-acetyl-D-methionine = N-acetyl-L-methionine. It carries out the reaction N-acetyl-D-phenylalanine = N-acetyl-L-phenylalanine. Its pathway is quinol/quinone metabolism; 1,4-dihydroxy-2-naphthoate biosynthesis; 1,4-dihydroxy-2-naphthoate from chorismate: step 4/7. The protein operates within quinol/quinone metabolism; menaquinone biosynthesis. Converts 2-succinyl-6-hydroxy-2,4-cyclohexadiene-1-carboxylate (SHCHC) to 2-succinylbenzoate (OSB). Also acts as a N-succinylamino acid racemase (NSAR) that catalyzes the racemization of various N-succinylamino acids, including N-succinyl-alanine and N-succinyl-phenylalanine. Can catalyze the racemization of a broad range of N-acylamino acids, including N-acetyl-methionine, N-acetyl-phenylalanine, N-carbamoyl-methionine, N-formyl-D-methionine, N-formyl-D-norleucine and N-carbamoyl-D-norleucine. May be a bifunctional enzyme involved in menaquinone biosynthesis and in an irreversible pathway for the conversion of D- to L-amino acids, thereby facilitating the survival and/or growth of the organism. The sequence is that of o-succinylbenzoate synthase from Geobacillus kaustophilus.